The primary structure comprises 906 residues: Ribonucleoside-diphosphate reductase large subunit-like protein (906 aa).

2 disordered regions span residues 1-70 and 89-129; these read MNPA…AGNT and VSWR…LSTF. Over residues 98–109 the composition is skewed to polar residues; the sequence is PDGTPSVLSLTR.

Belongs to the ribonucleoside diphosphate reductase large chain family.

It is found in the virion. The protein resides in the host cytoplasm. In terms of biological role, does not possess a ribonucleotide reductase activity. Betaherpesviruses probably use another strategy to expand the dNTP pool in a quiescent host cell. This Homo sapiens (Human) protein is Ribonucleoside-diphosphate reductase large subunit-like protein.